The primary structure comprises 628 residues: Beta-galactosidase large subunit (628 aa).

Catalysis depends on Glu468, which acts as the Proton donor. Glu536 serves as the catalytic Nucleophile.

It belongs to the glycosyl hydrolase 2 family. In terms of assembly, heterodimer of a large (LacL) and a small subunit (LacM).

It catalyses the reaction Hydrolysis of terminal non-reducing beta-D-galactose residues in beta-D-galactosides.. Functionally, component of a beta-galactosidase. The sequence is that of Beta-galactosidase large subunit from Lactobacillus helveticus (Lactobacillus suntoryeus).